The primary structure comprises 291 residues: Lipoyl synthase, organellar chromatophore (291 aa).

7 residues coordinate [4Fe-4S] cluster: Cys-33, Cys-38, Cys-44, Cys-59, Cys-63, Cys-66, and Ser-274. In terms of domain architecture, Radical SAM core spans 45-263; sequence FAGGTATFLI…AIGELEMNFL (219 aa).

The protein belongs to the radical SAM superfamily. Lipoyl synthase family. [4Fe-4S] cluster is required as a cofactor.

The protein localises to the plastid. The protein resides in the organellar chromatophore. The enzyme catalyses [[Fe-S] cluster scaffold protein carrying a second [4Fe-4S](2+) cluster] + N(6)-octanoyl-L-lysyl-[protein] + 2 oxidized [2Fe-2S]-[ferredoxin] + 2 S-adenosyl-L-methionine + 4 H(+) = [[Fe-S] cluster scaffold protein] + N(6)-[(R)-dihydrolipoyl]-L-lysyl-[protein] + 4 Fe(3+) + 2 hydrogen sulfide + 2 5'-deoxyadenosine + 2 L-methionine + 2 reduced [2Fe-2S]-[ferredoxin]. It participates in protein modification; protein lipoylation via endogenous pathway; protein N(6)-(lipoyl)lysine from octanoyl-[acyl-carrier-protein]: step 2/2. Catalyzes the radical-mediated insertion of two sulfur atoms into the C-6 and C-8 positions of the octanoyl moiety bound to the lipoyl domains of lipoate-dependent enzymes, thereby converting the octanoylated domains into lipoylated derivatives. The sequence is that of Lipoyl synthase, organellar chromatophore from Paulinella chromatophora.